We begin with the raw amino-acid sequence, 150 residues long: Endoribonuclease YbeY (150 aa).

3 residues coordinate Zn(2+): His113, His117, and His123.

Belongs to the endoribonuclease YbeY family. Zn(2+) is required as a cofactor.

The protein resides in the cytoplasm. Its function is as follows. Single strand-specific metallo-endoribonuclease involved in late-stage 70S ribosome quality control and in maturation of the 3' terminus of the 16S rRNA. The polypeptide is Endoribonuclease YbeY (Wolbachia sp. subsp. Drosophila simulans (strain wRi)).